A 361-amino-acid polypeptide reads, in one-letter code: 5-formaminoimidazole-4-carboxamide-1-(beta)-D-ribofuranosyl 5'-monophosphate synthetase (361 aa).

5-amino-1-(5-phospho-beta-D-ribosyl)imidazole-4-carboxamide is bound by residues His-27 and Ser-94. Positions 116-348 constitute an ATP-grasp domain; that stretch reads RAILRWEAER…MGQRIAKEIK (233 aa). Residues 146–208 and Glu-230 contribute to the ATP site; that span reads PDDI…ANYC. Asn-258 lines the 5-amino-1-(5-phospho-beta-D-ribosyl)imidazole-4-carboxamide pocket. Residues Gln-297 and Glu-310 each coordinate Mg(2+).

This sequence belongs to the phosphohexose mutase family. Mg(2+) serves as cofactor. It depends on Mn(2+) as a cofactor.

It catalyses the reaction 5-amino-1-(5-phospho-beta-D-ribosyl)imidazole-4-carboxamide + formate + ATP = 5-formamido-1-(5-phospho-D-ribosyl)imidazole-4-carboxamide + ADP + phosphate. Its pathway is purine metabolism; IMP biosynthesis via de novo pathway; 5-formamido-1-(5-phospho-D-ribosyl)imidazole-4-carboxamide from 5-amino-1-(5-phospho-D-ribosyl)imidazole-4-carboxamide (formate route): step 1/1. Catalyzes the ATP- and formate-dependent formylation of 5-aminoimidazole-4-carboxamide-1-beta-d-ribofuranosyl 5'-monophosphate (AICAR) to 5-formaminoimidazole-4-carboxamide-1-beta-d-ribofuranosyl 5'-monophosphate (FAICAR) in the absence of folates. This Methanococcus maripaludis (strain C5 / ATCC BAA-1333) protein is 5-formaminoimidazole-4-carboxamide-1-(beta)-D-ribofuranosyl 5'-monophosphate synthetase.